Here is a 318-residue protein sequence, read N- to C-terminus: NADH-ubiquinone oxidoreductase chain 1 (318 aa).

8 consecutive transmembrane segments (helical) span residues 2-22, 68-88, 100-120, 146-166, 171-191, 231-251, 253-273, and 294-314; these read PMAN…FLML, ITLY…LWTP, LGLL…LWSG, LAII…STLI, HLWL…STLA, IIMM…DALS, ELYT…FLWI, and LPLT…ISSI.

This sequence belongs to the complex I subunit 1 family. As to quaternary structure, core subunit of respiratory chain NADH dehydrogenase (Complex I) which is composed of 45 different subunits.

It localises to the mitochondrion inner membrane. It catalyses the reaction a ubiquinone + NADH + 5 H(+)(in) = a ubiquinol + NAD(+) + 4 H(+)(out). In terms of biological role, core subunit of the mitochondrial membrane respiratory chain NADH dehydrogenase (Complex I) which catalyzes electron transfer from NADH through the respiratory chain, using ubiquinone as an electron acceptor. Essential for the catalytic activity and assembly of complex I. The polypeptide is NADH-ubiquinone oxidoreductase chain 1 (MT-ND1) (Homo sapiens (Human)).